A 545-amino-acid chain; its full sequence is Cleavage and polyadenylation specificity factor subunit 6 (545 aa).

The segment at 37-69 is disordered; it reads ISPSANNGDAPEDRDYLDSLPAPGGNEGSKGAP. The 81-residue stretch at 81 to 161 folds into the RRM domain; the sequence is IALYIGNLTW…QNPIVTPCNK (81 aa). Residues 165–180 are compositionally biased toward polar residues; the sequence is SQFEMQSRKSTQSGQM. Disordered regions lie at residues 165–404 and 478–545; these read SQFE…PLSE and YGSV…YRHR. Gly residues predominate over residues 184–200; that stretch reads GKAGPPGSGSRGGGFPP. Pro residues-rich tracts occupy residues 220-230, 237-265, 287-363, and 372-383; these read PVGPGGPPPHF, PRLP…PLGG, PMGP…PPGN, and GPPPGDPYGRPP. Basic and acidic residues-rich tracts occupy residues 384–397 and 483–497; these read PYDR…DMDA and GRRE…SRSR. The segment covering 498-508 has biased composition (basic residues); that stretch reads EKSRRHKSRSR. Residues 509–545 show a composition bias toward basic and acidic residues; that stretch reads DRHEDYYRERSRERDRHRERDRDRERDREREREYRHR.

This sequence belongs to the RRM CPSF6/7 family. In terms of assembly, component of the cleavage factor Im (CFIm) complex.

Its subcellular location is the nucleus. It localises to the nucleoplasm. It is found in the nucleus speckle. The protein resides in the cytoplasm. Component of the cleavage factor Im (CFIm) complex that functions as an activator of the pre-mRNA 3'-end cleavage and polyadenylation processing required for the maturation of pre-mRNA into functional mRNAs. CFIm contributes to the recruitment of multiprotein complexes on specific sequences on the pre-mRNA 3'-end, so called cleavage and polyadenylation signals (pA signals). Most pre-mRNAs contain multiple pA signals, resulting in alternative cleavage and polyadenylation (APA) producing mRNAs with variable 3'-end formation. The CFIm complex acts as a key regulator of cleavage and polyadenylation site choice during APA through its binding to 5'-UGUA-3' elements localized in the 3'-untranslated region (UTR) for a huge number of pre-mRNAs. Plays a role in mRNA export. This chain is Cleavage and polyadenylation specificity factor subunit 6, found in Danio rerio (Zebrafish).